The following is a 422-amino-acid chain: F-box/kelch-repeat protein At3g27150 (422 aa).

One can recognise an F-box domain in the interval 68–114; the sequence is LLNVPQLVYELEVEILARVPRFEYWKLKLLNKGFSRLLKSDEIFKVR. 5 Kelch repeats span residues 162–212, 213–264, 266–312, 314–361, and 366–412; these read ESLC…TCGT, VVFV…YLRG, FYVL…SPPL, AVVG…VAFK, and KLLV…RFNH.

This chain is F-box/kelch-repeat protein At3g27150, found in Arabidopsis thaliana (Mouse-ear cress).